The chain runs to 294 residues: Putative cuticle collagen 145 (294 aa).

An N-terminal signal peptide occupies residues 1-30 (MEKILVTFSTGAASIAVLAVLFTVPSLYNT). A compositionally biased stretch (pro residues) spans 100-112 (TCPPGPPGPPGQP). Disordered regions lie at residues 100–133 (TCPPGPPGPPGQPGAPGTPGAPGPKGDDNTATFA) and 148–276 (PQGP…LPGN). Triple-helical region regions lie at residues 102 to 127 (PPGPPGPPGQPGAPGTPGAPGPKGDD) and 148 to 277 (PQGP…PGND). 2 stretches are compositionally biased toward low complexity: residues 164-194 (AGPDGQPGFPGQRGNDGFPGAPGAPGDNGQP) and 219-265 (APGA…DGQP). A Collagen-like domain is found at 218 to 276 (GAPGAPGNAGPAGPAGQDGFPGQDGAPGPAGPAGQDGFPGNAGSDGQPGAPGGPGLPGN).

This sequence belongs to the cuticular collagen family. Collagen polypeptide chains are complexed within the cuticle by disulfide bonds and other types of covalent cross-links.

In terms of biological role, nematode cuticles are composed largely of collagen-like proteins. The cuticle functions both as an exoskeleton and as a barrier to protect the worm from its environment. The chain is Putative cuticle collagen 145 (col-145) from Caenorhabditis elegans.